The primary structure comprises 231 residues: tRNA (guanine-N(1)-)-methyltransferase (231 aa).

Residues glycine 114 and 134-139 (IGDYVL) contribute to the S-adenosyl-L-methionine site.

Belongs to the RNA methyltransferase TrmD family. Homodimer.

The protein resides in the cytoplasm. It catalyses the reaction guanosine(37) in tRNA + S-adenosyl-L-methionine = N(1)-methylguanosine(37) in tRNA + S-adenosyl-L-homocysteine + H(+). In terms of biological role, specifically methylates guanosine-37 in various tRNAs. The polypeptide is tRNA (guanine-N(1)-)-methyltransferase (Clostridioides difficile (strain 630) (Peptoclostridium difficile)).